The following is a 205-amino-acid chain: Arginine exporter protein ArgO (205 aa).

Transmembrane regions (helical) follow at residues Met1–Pro21, Leu42–Leu62, Leu67–Ala87, Ile111–Val131, Trp147–Ala167, and Val182–Gly202.

The protein belongs to the LysE/ArgO transporter (TC 2.A.75) family.

The protein localises to the cell inner membrane. It catalyses the reaction L-arginine(in) = L-arginine(out). Involved in the export of arginine. Important to control the intracellular level of arginine and the correct balance between arginine and lysine. In Yersinia enterocolitica serotype O:8 / biotype 1B (strain NCTC 13174 / 8081), this protein is Arginine exporter protein ArgO.